Here is a 287-residue protein sequence, read N- to C-terminus: Inhibitory synaptic factor 1 (287 aa).

A disordered region spans residues 1-22 (MSQSRAPAREPSETPSQREQIR). A coiled-coil region spans residues 25-58 (MKMVIQQLEGILKELKDVAHELREVVGQIDKLTS). 2 disordered regions span residues 113 to 174 (RRSA…GTRE) and 189 to 287 (CDDD…NKDL). The segment covering 153–167 (EEASSSTHSQSQKTS) has biased composition (low complexity). Over residues 189 to 209 (CDDDEDEDEDEDGRDEEEDKL) the composition is skewed to acidic residues. The span at 259 to 274 (RNSSTQTVSDKSTQTL) shows a compositional bias: polar residues.

Belongs to the INSYN1 family.

The protein localises to the postsynaptic density. In terms of biological role, may be a component of the protein machinery at the inhibitory synapses, probably acting as a scaffold. In Danio rerio (Zebrafish), this protein is Inhibitory synaptic factor 1.